A 463-amino-acid chain; its full sequence is Cysteine--tRNA ligase (463 aa).

Residue C27 coordinates Zn(2+). A 'HIGH' region motif is present at residues 29 to 39 (MTVYDYCHLGH). Zn(2+)-binding residues include C208, H233, and E237. Residues 265–269 (KMSKS) carry the 'KMSKS' region motif. K268 contacts ATP.

The protein belongs to the class-I aminoacyl-tRNA synthetase family. In terms of assembly, monomer. Zn(2+) serves as cofactor.

Its subcellular location is the cytoplasm. It carries out the reaction tRNA(Cys) + L-cysteine + ATP = L-cysteinyl-tRNA(Cys) + AMP + diphosphate. The chain is Cysteine--tRNA ligase from Marinobacter nauticus (strain ATCC 700491 / DSM 11845 / VT8) (Marinobacter aquaeolei).